A 426-amino-acid polypeptide reads, in one-letter code: Tyrosine-protein phosphatase non-receptor type 20 (426 aa).

A compositionally biased stretch (basic residues) spans 1–10 (MSSPRKVRGK). Residues 1 to 58 (MSSPRKVRGKTGRDNDEEEGNSGNLNLRNSLPSSSQKMTPTKPIFGNKMNSENVKPSH) are disordered. The span at 21–35 (NSGNLNLRNSLPSSS) shows a compositional bias: low complexity. Ser-76 is subject to Phosphoserine. A compositionally biased stretch (polar residues) spans 95–117 (NSMDSETAGPSKTVSPVLSGSSR). The disordered stretch occupies residues 95-124 (NSMDSETAGPSKTVSPVLSGSSRLSKDTET). Phosphoserine is present on Ser-127. The 254-residue stretch at 165 to 418 (IIREFLELEQ…QFCYEIVLEV (254 aa)) folds into the Tyrosine-protein phosphatase domain. Residues Asp-329, 359–365 (CSAGVGR), and Gln-403 contribute to the substrate site. The active-site Phosphocysteine intermediate is the Cys-359.

It belongs to the protein-tyrosine phosphatase family. Non-receptor class subfamily. In terms of tissue distribution, testis-specific. Specifically expressed in testicular germ cells that undergo meiosis (at protein level).

The protein resides in the nucleus. The protein localises to the cytoplasm. It is found in the cytoskeleton. Its subcellular location is the microtubule organizing center. It localises to the centrosome. The enzyme catalyses O-phospho-L-tyrosyl-[protein] + H2O = L-tyrosyl-[protein] + phosphate. Tyrosine-protein phosphatase targeted to sites of actin polymerization in response of varied extracellular stimuli. Has tyrosine phosphatase activity towards various tyrosyl phosphorylated substrates. In Mus musculus (Mouse), this protein is Tyrosine-protein phosphatase non-receptor type 20 (Ptpn20).